Consider the following 355-residue polypeptide: Elongation factor Ts (355 aa).

An involved in Mg(2+) ion dislocation from EF-Tu region spans residues T82–V85.

This sequence belongs to the EF-Ts family.

The protein localises to the cytoplasm. Functionally, associates with the EF-Tu.GDP complex and induces the exchange of GDP to GTP. It remains bound to the aminoacyl-tRNA.EF-Tu.GTP complex up to the GTP hydrolysis stage on the ribosome. In Helicobacter hepaticus (strain ATCC 51449 / 3B1), this protein is Elongation factor Ts.